Here is a 292-residue protein sequence, read N- to C-terminus: 4-hydroxy-tetrahydrodipicolinate synthase (292 aa).

T45 is a pyruvate binding site. Y133 (proton donor/acceptor) is an active-site residue. The active-site Schiff-base intermediate with substrate is the K162. I204 provides a ligand contact to pyruvate.

This sequence belongs to the DapA family. In terms of assembly, homotetramer; dimer of dimers.

The protein localises to the cytoplasm. It carries out the reaction L-aspartate 4-semialdehyde + pyruvate = (2S,4S)-4-hydroxy-2,3,4,5-tetrahydrodipicolinate + H2O + H(+). It participates in amino-acid biosynthesis; L-lysine biosynthesis via DAP pathway; (S)-tetrahydrodipicolinate from L-aspartate: step 3/4. In terms of biological role, catalyzes the condensation of (S)-aspartate-beta-semialdehyde [(S)-ASA] and pyruvate to 4-hydroxy-tetrahydrodipicolinate (HTPA). The chain is 4-hydroxy-tetrahydrodipicolinate synthase from Nitratidesulfovibrio vulgaris (strain DSM 19637 / Miyazaki F) (Desulfovibrio vulgaris).